The sequence spans 501 residues: Lysine--tRNA ligase (501 aa).

Residues aspartate 411 and glutamate 418 each contribute to the Mg(2+) site.

The protein belongs to the class-II aminoacyl-tRNA synthetase family. As to quaternary structure, homodimer. Mg(2+) serves as cofactor.

The protein localises to the cytoplasm. It catalyses the reaction tRNA(Lys) + L-lysine + ATP = L-lysyl-tRNA(Lys) + AMP + diphosphate. This chain is Lysine--tRNA ligase, found in Mycolicibacterium gilvum (strain PYR-GCK) (Mycobacterium gilvum (strain PYR-GCK)).